We begin with the raw amino-acid sequence, 266 residues long: Cell wall synthesis protein Wag31 (266 aa).

The stretch at 31-64 (FLDLVENELTQLIEENSDLRQRIEELDHELAAGG) forms a coiled coil. Threonine 77 is subject to Phosphothreonine. The stretch at 152-203 (TAEATVAEAQQRADAMLADAQTRSEVQSRQAQEKADALQAEAERKHSEIMGA) forms a coiled coil. Positions 239 to 266 (ELGQRGSAAPVDSNADAGGFDQFNRGNN) are disordered.

The protein belongs to the DivIVA family. As to quaternary structure, forms homooligomers. In terms of processing, phosphorylated by PknA.

It is found in the cytoplasm. In terms of biological role, important for maintaining cell shape and cell wall integrity by localizing peptidoglycan synthesis to the cell poles. This Mycobacterium leprae (strain TN) protein is Cell wall synthesis protein Wag31 (wag31).